Reading from the N-terminus, the 316-residue chain is Membrane protein UL148 (316 aa).

Positions 1–20 (MLRLLFTLVLLALYGPSVDA) are cleaved as a signal peptide. The chain crosses the membrane as a helical span at residues 286–308 (FIVQYLNTLLITMMAAIWARVLI).

As to quaternary structure, interacts with host SEL1L.

It localises to the host endoplasmic reticulum membrane. In terms of biological role, chaperone protein that plays an important role in HCMV tropism. Cooperates with UL116 to regulate the abundance of gH-gL complexes in virion. Favors the incorporation of gL into virions once UL116 has regulated the early folding steps of virion assembly. Interacts with the host ERAD machinery and slows gO decay which would otherwise be constitutively degraded. Reorganizes the host endoplasmic reticulum and activates the unfolded protein response. Additionally, plays a role in the evasion of antiviral immune response by down-regulating cell surface expression of host CD58. Mechanistically, interacts with host CD58 and retains its immature form intracellularly. The capacity to cause endoplasmic reticulum reorganization and the intracellular retention of host CD58 are functionally independent properties. The chain is Membrane protein UL148 (UL148) from Human cytomegalovirus (strain Merlin) (HHV-5).